Consider the following 365-residue polypeptide: MASSSTAFYLKDAGFHIRNVPKEWNDWNLFHIFQVFGRVGYCRVAGQSNDMQLGFVNMLSAADAEEVRKNLHDGNLIGDNYSLKVSDHKNIGGALLPMASISVQKLLSSPPAKSGPVHLSSSWLPLNKDIEVEVVDYLPSSSAAKDVFALTILRINDAQSNEKYNAMHEKMNSYAQLVAFDSELQIGYDGVFRESPRSIKRVRRISATKLYLVDFGKIINYEKSKCFQIPKVFQTIPTRVSFCGLDGLTWSEQAIPSFDNIREVVQKWGAMENATLHAVTCGFAGAINMINLFCGNSVLAERLQRKGICEYLPRHQQPRFAYSRDSLLKHTNAGVTAHISNDADVVKDLLKKIDGVKSMLRELDL.

An RRM domain is found at 13–90 (AGFHIRNVPK…YSLKVSDHKN (78 aa)).

In terms of biological role, required maternally for early embryonic cell divisions. May have a role in DNA replication. The protein is Embryonic developmental protein tofu-6 of Caenorhabditis briggsae.